We begin with the raw amino-acid sequence, 144 residues long: Large ribosomal subunit protein uL15 (144 aa).

Residues 20-49 (GRGIGSGLGKTGGRGHKGQKSRSGGFHKVG) are disordered. A compositionally biased stretch (gly residues) spans 21 to 31 (RGIGSGLGKTG).

This sequence belongs to the universal ribosomal protein uL15 family. Part of the 50S ribosomal subunit.

In terms of biological role, binds to the 23S rRNA. The sequence is that of Large ribosomal subunit protein uL15 from Neisseria meningitidis serogroup C (strain 053442).